Here is a 159-residue protein sequence, read N- to C-terminus: Cyclic pyranopterin monophosphate synthase (159 aa).

Substrate is bound by residues 76–78 (MCH) and 114–115 (ME). The active site involves Asp129.

This sequence belongs to the MoaC family. Homohexamer; trimer of dimers.

It catalyses the reaction (8S)-3',8-cyclo-7,8-dihydroguanosine 5'-triphosphate = cyclic pyranopterin phosphate + diphosphate. It functions in the pathway cofactor biosynthesis; molybdopterin biosynthesis. Catalyzes the conversion of (8S)-3',8-cyclo-7,8-dihydroguanosine 5'-triphosphate to cyclic pyranopterin monophosphate (cPMP). In Natranaerobius thermophilus (strain ATCC BAA-1301 / DSM 18059 / JW/NM-WN-LF), this protein is Cyclic pyranopterin monophosphate synthase.